Reading from the N-terminus, the 797-residue chain is Phenylalanine--tRNA ligase beta subunit (797 aa).

Residues 40–154 form the tRNA-binding domain; that stretch reads MEGLSKLVVG…ADAKVGDSIF (115 aa). A B5 domain is found at 407–482; it reads PILPKVSITL…RIYGYDNLPS (76 aa). Mg(2+)-binding residues include aspartate 460, aspartate 466, glutamate 469, and glutamate 470. The region spanning 704–797 is the FDX-ACB domain; sequence PKVQAVHRDI…LVEKLDIEIR (94 aa).

This sequence belongs to the phenylalanyl-tRNA synthetase beta subunit family. Type 1 subfamily. Tetramer of two alpha and two beta subunits. It depends on Mg(2+) as a cofactor.

The protein localises to the cytoplasm. It carries out the reaction tRNA(Phe) + L-phenylalanine + ATP = L-phenylalanyl-tRNA(Phe) + AMP + diphosphate + H(+). This Lactococcus lactis subsp. lactis (strain IL1403) (Streptococcus lactis) protein is Phenylalanine--tRNA ligase beta subunit.